A 259-amino-acid polypeptide reads, in one-letter code: Peroxiredoxin-4 (259 aa).

Positions 66–224 constitute a Thioredoxin domain; it reads IRIRKPAPAF…AIRTLKALKF (159 aa). Residue Cys111 is the Cysteine sulfenic acid (-SOH) intermediate of the active site.

The protein belongs to the peroxiredoxin family. AhpC/Prx1 subfamily. Homodimer; disulfide-linked, upon oxidation. 5 homodimers assemble to form a ring-like decamer.

Its subcellular location is the cytoplasm. The protein resides in the endoplasmic reticulum. The catalysed reaction is a hydroperoxide + [thioredoxin]-dithiol = an alcohol + [thioredoxin]-disulfide + H2O. Functionally, thiol-specific peroxidase that catalyzes the reduction of hydrogen peroxide and organic hydroperoxides to water and alcohols, respectively. Plays a role in cell protection against oxidative stress by detoxifying peroxides and as sensor of hydrogen peroxide-mediated signaling events. Regulates the activation of NF-kappa-B in the cytosol by a modulation of I-kappa-B-alpha phosphorylation. This Dictyostelium discoideum (Social amoeba) protein is Peroxiredoxin-4 (prdx4).